A 556-amino-acid chain; its full sequence is Mitochondrial distribution and morphology protein 34-2 (556 aa).

An SMP-LTD domain is found at 1–195; it reads MAFNFNWSPL…LPAIIHRLSL (195 aa). Disordered regions lie at residues 206–239, 299–423, and 440–473; these read EEMNDETDNTAKSSEGPGQDPLASPPQDPVDSLG, TDTS…PVTP, and HLPSFSRPTRRDADLSYSHETIRGPKAEDVDATP. A compositionally biased stretch (polar residues) spans 299 to 333; that stretch reads TDTSEFPSSVISPLSPTLSREQSQMGSMSSLHETA. A compositionally biased stretch (low complexity) spans 334–357; sequence SNASMQSRPSMSSHSFSTSTYGLS. The segment covering 362–374 has biased composition (basic residues); sequence RHSKAHARKRKKR. Positions 375-385 are enriched in basic and acidic residues; that stretch reads VVDLRRPKTTD. The span at 391–402 shows a compositional bias: polar residues; it reads SDESVMTESSRP. The span at 459–468 shows a compositional bias: basic and acidic residues; it reads ETIRGPKAED.

It belongs to the MDM34 family. As to quaternary structure, component of the ER-mitochondria encounter structure (ERMES) or MDM complex, composed of mmm1, mdm10, mdm12 and mdm34.

It localises to the mitochondrion outer membrane. Functionally, component of the ERMES/MDM complex, which serves as a molecular tether to connect the endoplasmic reticulum (ER) and mitochondria. Components of this complex are involved in the control of mitochondrial shape and protein biogenesis, and function in nonvesicular lipid trafficking between the ER and mitochondria. Mdm34 is required for the interaction of the ER-resident membrane protein mmm1 and the outer mitochondrial membrane-resident beta-barrel protein mdm10. This chain is Mitochondrial distribution and morphology protein 34-2, found in Penicillium rubens (strain ATCC 28089 / DSM 1075 / NRRL 1951 / Wisconsin 54-1255) (Penicillium chrysogenum).